A 376-amino-acid chain; its full sequence is Pyruvate dehydrogenase E1 component subunit beta-2, mitochondrial (376 aa).

The transit peptide at 1–36 (MLGAARRQLGSGPMLGQVLRRLRPATAAAADAARAY) directs the protein to the mitochondrion. Position 99 (E99) interacts with thiamine diphosphate. I152, A200, I201, and D203 together coordinate K(+).

In terms of assembly, tetramer of 2 alpha and 2 beta subunits. Thiamine diphosphate serves as cofactor.

Its subcellular location is the mitochondrion matrix. The enzyme catalyses N(6)-[(R)-lipoyl]-L-lysyl-[protein] + pyruvate + H(+) = N(6)-[(R)-S(8)-acetyldihydrolipoyl]-L-lysyl-[protein] + CO2. Its function is as follows. The pyruvate dehydrogenase complex catalyzes the overall conversion of pyruvate to acetyl-CoA and CO(2). It contains multiple copies of three enzymatic components: pyruvate dehydrogenase (E1), dihydrolipoamide acetyltransferase (E2) and lipoamide dehydrogenase (E3). The sequence is that of Pyruvate dehydrogenase E1 component subunit beta-2, mitochondrial from Oryza sativa subsp. japonica (Rice).